Here is a 103-residue protein sequence, read N- to C-terminus: Co-chaperonin GroES (103 aa).

The protein belongs to the GroES chaperonin family. Heptamer of 7 subunits arranged in a ring. Interacts with the chaperonin GroEL.

It localises to the cytoplasm. In terms of biological role, together with the chaperonin GroEL, plays an essential role in assisting protein folding. The GroEL-GroES system forms a nano-cage that allows encapsulation of the non-native substrate proteins and provides a physical environment optimized to promote and accelerate protein folding. GroES binds to the apical surface of the GroEL ring, thereby capping the opening of the GroEL channel. In Rippkaea orientalis (strain PCC 8801 / RF-1) (Cyanothece sp. (strain PCC 8801)), this protein is Co-chaperonin GroES.